We begin with the raw amino-acid sequence, 433 residues long: 3-phosphoshikimate 1-carboxyvinyltransferase (433 aa).

3-phosphoshikimate contacts are provided by Lys-23, Ser-24, and Arg-28. Residue Lys-23 participates in phosphoenolpyruvate binding. Phosphoenolpyruvate contacts are provided by Gly-95 and Arg-123. 3-phosphoshikimate-binding residues include Ser-170, Ser-171, Gln-172, Ser-198, Asp-317, and Lys-344. Gln-172 is a binding site for phosphoenolpyruvate. Residue Asp-317 is the Proton acceptor of the active site. The phosphoenolpyruvate site is built by Arg-348, Arg-391, and Lys-416.

Belongs to the EPSP synthase family. Monomer.

The protein localises to the cytoplasm. The catalysed reaction is 3-phosphoshikimate + phosphoenolpyruvate = 5-O-(1-carboxyvinyl)-3-phosphoshikimate + phosphate. It functions in the pathway metabolic intermediate biosynthesis; chorismate biosynthesis; chorismate from D-erythrose 4-phosphate and phosphoenolpyruvate: step 6/7. Catalyzes the transfer of the enolpyruvyl moiety of phosphoenolpyruvate (PEP) to the 5-hydroxyl of shikimate-3-phosphate (S3P) to produce enolpyruvyl shikimate-3-phosphate and inorganic phosphate. The chain is 3-phosphoshikimate 1-carboxyvinyltransferase from Neisseria meningitidis serogroup B (strain ATCC BAA-335 / MC58).